The chain runs to 309 residues: Olfactory receptor 10J5 (309 aa).

Residues 1–27 (MQRNNFTEVIEFVFLGFSSFGKHQITL) are Extracellular-facing. The helical transmembrane segment at 28–48 (FVVFLTIYILTLAGNIIIVTI) threads the bilayer. The Cytoplasmic portion of the chain corresponds to 49 to 57 (THIDHHLHT). A helical membrane pass occupies residues 58 to 78 (PMYFFLSMLASSETVYTLVIV). The Extracellular segment spans residues 79 to 84 (PRMLSS). Residues 85 to 105 (LIFYNLPISLAGCATQMFFFV) form a helical membrane-spanning segment. Residues C97 and C178 are joined by a disulfide bond. At 106 to 131 (TLATNNCFLLTAMGYDRYVAICNPLR) the chain is on the cytoplasmic side. Residues 132–152 (YTIIMSKGMCALLVCGSLGTG) form a helical membrane-spanning segment. Residues 153–203 (LVMAVLHVPAMFHLPFCGTVVEHFFCDIYPVMKLSCVDTTVNEIINYGVSS) lie on the Extracellular side of the membrane. A helical membrane pass occupies residues 204–224 (FVILVPIGLIFISYVLIVSSI). The Cytoplasmic segment spans residues 225-235 (LKIVSTEGQKK). Residues 236-256 (AFATCASHLTVVIVHYGCASI) traverse the membrane as a helical segment. Over 257–270 (AYLKPKSESSVEKD) the chain is Extracellular. A helical transmembrane segment spans residues 271–291 (LLLSVTYTIITPLLNPVVYSL). Topologically, residues 292–309 (RNKEVKDALCRAVGRNTS) are cytoplasmic.

It belongs to the G-protein coupled receptor 1 family. As to expression, expressed in the olfactory epithelium as well as in the testis. Expressed in round spermatids during stages VI-VIII of spermatogenesis.

It is found in the cell membrane. In terms of biological role, olfactory receptor. Activated by the synthetic floral odorant, lyral, and by alpha-cedrene, a sesquiterpene constituent of cedarwood oil. Its activation increases intracellular Ca(2+). Acts as a key regulator of myogenesis through its actions on cell migration and adhesion by activating the Ca(2+)-dependent AKT signal transduction pathway. Also acts as a regulator of angiogenesis. Moreover, plays a role in the regulation of lipid accumulation in hepatocytes via the cAMP-PKA pathway. Involved in sperm chemotaxis and motility. The protein is Olfactory receptor 10J5 of Mus musculus (Mouse).